A 544-amino-acid polypeptide reads, in one-letter code: Chaperonin GroEL (544 aa).

Residues 29-32, 86-90, glycine 413, 476-478, and aspartate 492 each bind ATP; these read TLGP, DGTTT, and NAA.

This sequence belongs to the chaperonin (HSP60) family. As to quaternary structure, forms a cylinder of 14 subunits composed of two heptameric rings stacked back-to-back. Interacts with the co-chaperonin GroES.

It localises to the cytoplasm. It is found in the secreted. It carries out the reaction ATP + H2O + a folded polypeptide = ADP + phosphate + an unfolded polypeptide.. In terms of biological role, together with its co-chaperonin GroES, plays an essential role in assisting protein folding. The GroEL-GroES system forms a nano-cage that allows encapsulation of the non-native substrate proteins and provides a physical environment optimized to promote and accelerate protein folding. The polypeptide is Chaperonin GroEL (Bacillus subtilis (strain 168)).